A 162-amino-acid polypeptide reads, in one-letter code: Peptidyl-prolyl cis-trans isomerase (162 aa).

Residues 16 to 162 (KTAYATIKTN…IESVVFSPSL (147 aa)) enclose the PPIase cyclophilin-type domain.

It belongs to the cyclophilin-type PPIase family.

The enzyme catalyses [protein]-peptidylproline (omega=180) = [protein]-peptidylproline (omega=0). Functionally, PPIases accelerate the folding of proteins. It catalyzes the cis-trans isomerization of proline imidic peptide bonds in oligopeptides. This chain is Peptidyl-prolyl cis-trans isomerase (ppiA), found in Helicobacter pylori (strain J99 / ATCC 700824) (Campylobacter pylori J99).